The primary structure comprises 779 residues: Probable phosphoketolase 2 (779 aa).

It belongs to the XFP family. The cofactor is thiamine diphosphate.

In Rhizobium meliloti (strain 1021) (Ensifer meliloti), this protein is Probable phosphoketolase 2.